The sequence spans 205 residues: High frequency lysogenization protein HflD homolog (205 aa).

The protein belongs to the HflD family.

The protein resides in the cytoplasm. Its subcellular location is the cell inner membrane. This chain is High frequency lysogenization protein HflD homolog, found in Shewanella piezotolerans (strain WP3 / JCM 13877).